Reading from the N-terminus, the 77-residue chain is Conotoxin ArMKLT2-0322 (77 aa).

An N-terminal signal peptide occupies residues 1 to 22; sequence MKLTCVLIIAVLFLIVCQLNTA. Residues 23–47 constitute a propeptide that is removed on maturation; it reads DDSRDKQEYRAVRLRDAIRNSRGSR. Cystine bridges form between Cys49–Cys62, Cys56–Cys67, and Cys61–Cys74.

The protein belongs to the conotoxin O1 superfamily. Expressed by the venom duct.

Its subcellular location is the secreted. This is Conotoxin ArMKLT2-0322 from Conus arenatus (Sand-dusted cone).